Reading from the N-terminus, the 91-residue chain is Small ribosomal subunit protein uS17 (91 aa).

This sequence belongs to the universal ribosomal protein uS17 family. In terms of assembly, part of the 30S ribosomal subunit.

Its function is as follows. One of the primary rRNA binding proteins, it binds specifically to the 5'-end of 16S ribosomal RNA. The chain is Small ribosomal subunit protein uS17 from Saccharopolyspora erythraea (strain ATCC 11635 / DSM 40517 / JCM 4748 / NBRC 13426 / NCIMB 8594 / NRRL 2338).